The chain runs to 115 residues: UPF0122 protein NT01CX_2214 (115 aa).

Belongs to the UPF0122 family.

In terms of biological role, might take part in the signal recognition particle (SRP) pathway. This is inferred from the conservation of its genetic proximity to ftsY/ffh. May be a regulatory protein. In Clostridium novyi (strain NT), this protein is UPF0122 protein NT01CX_2214.